A 518-amino-acid polypeptide reads, in one-letter code: ATP synthase subunit alpha (518 aa).

Position 169 to 176 (Gly-169 to Thr-176) interacts with ATP.

Belongs to the ATPase alpha/beta chains family. In terms of assembly, F-type ATPases have 2 components, CF(1) - the catalytic core - and CF(0) - the membrane proton channel. CF(1) has five subunits: alpha(3), beta(3), gamma(1), delta(1), epsilon(1). CF(0) has three main subunits: a(1), b(2) and c(9-12). The alpha and beta chains form an alternating ring which encloses part of the gamma chain. CF(1) is attached to CF(0) by a central stalk formed by the gamma and epsilon chains, while a peripheral stalk is formed by the delta and b chains.

Its subcellular location is the cell membrane. It carries out the reaction ATP + H2O + 4 H(+)(in) = ADP + phosphate + 5 H(+)(out). In terms of biological role, produces ATP from ADP in the presence of a proton gradient across the membrane. The alpha chain is a regulatory subunit. The chain is ATP synthase subunit alpha from Mycoplasma pneumoniae (strain ATCC 29342 / M129 / Subtype 1) (Mycoplasmoides pneumoniae).